We begin with the raw amino-acid sequence, 137 residues long: Large ribosomal subunit protein uL16 (137 aa).

The protein belongs to the universal ribosomal protein uL16 family. Part of the 50S ribosomal subunit.

Its function is as follows. Binds 23S rRNA and is also seen to make contacts with the A and possibly P site tRNAs. This Allorhizobium ampelinum (strain ATCC BAA-846 / DSM 112012 / S4) (Agrobacterium vitis (strain S4)) protein is Large ribosomal subunit protein uL16.